The following is a 322-amino-acid chain: Crystallin J1B (322 aa).

It belongs to the ADP-ribosylglycohydrolase family. J1 crystallin subfamily. In terms of tissue distribution, expressed in the rhopalia. Present in both the large and small eyes.

This chain is Crystallin J1B, found in Tripedalia cystophora (Jellyfish).